The sequence spans 92 residues: MLKEVREGVILRVIVKPNARENSIEGIDEWRGRIKVNIKAQPVKGKANRELIKFLSNLFGAEVEILKGETSREKDVLVRGVNLEEVKRRLKL.

The protein belongs to the UPF0235 family.

This Pyrococcus abyssi (strain GE5 / Orsay) protein is UPF0235 protein PYRAB05010.